Reading from the N-terminus, the 240-residue chain is UDP-2,3-diacylglucosamine hydrolase (240 aa).

Mn(2+) is bound by residues D7, H9, D40, N78, and H113. Residue 78–79 (NR) coordinates substrate. Positions 121, 159, 166, and 194 each coordinate substrate. Residues H194 and H196 each contribute to the Mn(2+) site.

The protein belongs to the LpxH family. Mn(2+) is required as a cofactor.

It is found in the cell inner membrane. It carries out the reaction UDP-2-N,3-O-bis[(3R)-3-hydroxytetradecanoyl]-alpha-D-glucosamine + H2O = 2-N,3-O-bis[(3R)-3-hydroxytetradecanoyl]-alpha-D-glucosaminyl 1-phosphate + UMP + 2 H(+). The protein operates within glycolipid biosynthesis; lipid IV(A) biosynthesis; lipid IV(A) from (3R)-3-hydroxytetradecanoyl-[acyl-carrier-protein] and UDP-N-acetyl-alpha-D-glucosamine: step 4/6. Hydrolyzes the pyrophosphate bond of UDP-2,3-diacylglucosamine to yield 2,3-diacylglucosamine 1-phosphate (lipid X) and UMP by catalyzing the attack of water at the alpha-P atom. Involved in the biosynthesis of lipid A, a phosphorylated glycolipid that anchors the lipopolysaccharide to the outer membrane of the cell. This is UDP-2,3-diacylglucosamine hydrolase from Pseudomonas putida (strain ATCC 700007 / DSM 6899 / JCM 31910 / BCRC 17059 / LMG 24140 / F1).